The primary structure comprises 111 residues: Large ribosomal subunit protein uL24 (111 aa).

This sequence belongs to the universal ribosomal protein uL24 family. Part of the 50S ribosomal subunit.

In terms of biological role, one of two assembly initiator proteins, it binds directly to the 5'-end of the 23S rRNA, where it nucleates assembly of the 50S subunit. Functionally, one of the proteins that surrounds the polypeptide exit tunnel on the outside of the subunit. This chain is Large ribosomal subunit protein uL24, found in Streptococcus pneumoniae (strain Hungary19A-6).